The sequence spans 130 residues: Large ribosomal subunit protein bL20 (130 aa).

This sequence belongs to the bacterial ribosomal protein bL20 family.

Functionally, binds directly to 23S ribosomal RNA and is necessary for the in vitro assembly process of the 50S ribosomal subunit. It is not involved in the protein synthesizing functions of that subunit. The polypeptide is Large ribosomal subunit protein bL20 (Salinispora tropica (strain ATCC BAA-916 / DSM 44818 / JCM 13857 / NBRC 105044 / CNB-440)).